The primary structure comprises 331 residues: MNNDNKRSAGGLGLVGDIGGTNARFALWRGQRLESIEVLACADYPRPELAVRDYLARIGESVANIDSVCLACAGPVGAADFRFTNNHWVINRAAFREELGLDHLLLVNDFSTMAWAASRLGADELVQVRAGSAQADRARLIIGPGTGLGVGSLLPLGGGRWEVLPCEGGHVDLPVTSPRDFALWQGLQARYGHVSAERALSGNGLLALYEISCALDGVAVRASSAAEVGALAMAGDAQADAVLEHFFLWLARVAGNAVLTVGALGGVYITGGIVPRFLERFIASGFAEAFASRGKTSGAYLQDVPVWVMTAEHPGLLGAGVALQQALDAEG.

16-21 (GDIGGT) is a binding site for ATP.

The protein belongs to the bacterial glucokinase family.

It localises to the cytoplasm. It carries out the reaction D-glucose + ATP = D-glucose 6-phosphate + ADP + H(+). The protein is Glucokinase of Pseudomonas aeruginosa (strain LESB58).